A 406-amino-acid chain; its full sequence is UPF0754 membrane protein CYA_0973 (406 aa).

2 helical membrane-spanning segments follow: residues M1–N21 and I385–L405.

The protein belongs to the UPF0754 family.

It localises to the cell inner membrane. This Synechococcus sp. (strain JA-3-3Ab) (Cyanobacteria bacterium Yellowstone A-Prime) protein is UPF0754 membrane protein CYA_0973.